A 28-amino-acid chain; its full sequence is Conotoxin Cl5.3 (28 aa).

This sequence belongs to the conotoxin T superfamily. In terms of processing, contains 2 disulfide bonds that can be either 'C1-C3, C2-C4' or 'C1-C4, C2-C3', since these disulfide connectivities have been observed for conotoxins with cysteine framework V (for examples, see AC P0DQQ7 and AC P81755). In terms of tissue distribution, expressed by the venom duct.

Its subcellular location is the secreted. This chain is Conotoxin Cl5.3, found in Californiconus californicus (California cone).